Here is a 617-residue protein sequence, read N- to C-terminus: Melatonin-related receptor (617 aa).

At 1 to 30 the chain is on the extracellular side; the sequence is MGPTLAVPTPYGCIGCKLPQPEYPPALIIF. The helical transmembrane segment at 31 to 51 threads the bilayer; that stretch reads MFCAMVITIVVDLIGNSMVIL. Residues 52 to 64 lie on the Cytoplasmic side of the membrane; sequence AVTKNKKLRNSGN. Residues 65–85 traverse the membrane as a helical segment; it reads IFVVSLSVADMLVAIYPYPLM. The Extracellular segment spans residues 86–103; it reads LHAMSIGGWDLSQLQCQM. The cysteines at positions 101 and 178 are disulfide-linked. The chain crosses the membrane as a helical span at residues 104-124; sequence VGFITGLSVVGSIFNIVAIAI. Topologically, residues 125 to 143 are cytoplasmic; that stretch reads NRYCYICHSLQYERIFSVR. Residues 144–164 form a helical membrane-spanning segment; it reads NTCIYLVITWIMTVLAVLPNM. Residues 165–188 are Extracellular-facing; it reads YIGTIEYDPRTYTCIFNYLNNPVF. A helical transmembrane segment spans residues 189-209; sequence TVTIVCIHFVLPLLIVGFCYV. Topologically, residues 210-239 are cytoplasmic; that stretch reads RIWTKVLAARDPAGQNPDNQLAEVRNFLTM. The chain crosses the membrane as a helical span at residues 240-260; the sequence is FVIFLLFAVCWCPINVLTVLV. At 261–273 the chain is on the extracellular side; that stretch reads AVSPKEMAGKIPN. The chain crosses the membrane as a helical span at residues 274–294; sequence WLYLAAYFIAYFNSCLNAVIY. Topologically, residues 295 to 617 are cytoplasmic; it reads GLLNENFRRE…VEDDPDEMAV (323 aa). 2 disordered regions span residues 340-438 and 464-596; these read AHAR…ATVY and SVHF…VTTS. Basic and acidic residues predominate over residues 341–353; that stretch reads HARDQAREQDRAH. The span at 485–500 shows a compositional bias: polar residues; the sequence is GSHSKSAFSAATSHPK.

This sequence belongs to the G-protein coupled receptor 1 family. In terms of assembly, homodimer, and heterodimer with MTNR1A and MTNR1B. Interacts with KAT5. Interacts with RTN4 isoform A/NOGO-A. Interacts with TGFBR1. Interacts with GTF2I. Post-translationally, cleaved by CAPN1 in a calcium-dependent manner. Hypothalamus and pituitary.

It localises to the cell membrane. It is found in the postsynaptic density. Its subcellular location is the nucleus. Its function is as follows. G protein-coupled receptor that plays a role in numerous physiological processes including regulation of energy metabolism, neurite outgrowth or cell migration. Promotes self-renewal and neuronal differentiation of neural progenitor cells through activation of the NOTCH and WNT/beta-catenin signaling pathways. Modulates the KAT5-dependent glucocorticoid receptor signaling by modulating KAT5 subcellular compartmentalisation. Also plays a role in the activation TGFBR1 in the absence of TGFBR2 by interfering with FKBP1A binding to TGFBR1, leading to induction of both canonical and non-canonical SMAD signaling pathways resulting in inhibition of proliferation or promotion of migration. Functionally, upon cleavage by CAPN1, functions as a scaffold in the nucleus for interacting partners such as GTF2I to promote FOS promoter activation. This chain is Melatonin-related receptor (GPR50), found in Homo sapiens (Human).